A 349-amino-acid chain; its full sequence is tRNA pseudouridine synthase D (349 aa).

Position 26 (phenylalanine 26) interacts with substrate. The active-site Nucleophile is the aspartate 79. Residue asparagine 128 participates in substrate binding. In terms of domain architecture, TRUD spans 154-302; the sequence is GVPNYFGSQR…VEGSRRAVLL (149 aa). Phenylalanine 328 lines the substrate pocket.

It belongs to the pseudouridine synthase TruD family.

It carries out the reaction uridine(13) in tRNA = pseudouridine(13) in tRNA. In terms of biological role, responsible for synthesis of pseudouridine from uracil-13 in transfer RNAs. This is tRNA pseudouridine synthase D from Yersinia pseudotuberculosis serotype O:1b (strain IP 31758).